A 497-amino-acid chain; its full sequence is Probable gamma-aminobutyrate transaminase 2, mitochondrial (497 aa).

Residues 1-37 constitute a mitochondrion transit peptide; that stretch reads MNLIKHAAFAASFQGETDCTSHASARKFSTSGSSPLL. Residue 153 to 154 coordinates pyridoxal 5'-phosphate; sequence GS. Tyr-186 provides a ligand contact to substrate. Position 293 (Asp-293) interacts with pyridoxal 5'-phosphate. Lys-322 provides a ligand contact to substrate. Lys-322 is modified (N6-(pyridoxal phosphate)lysine).

It belongs to the class-III pyridoxal-phosphate-dependent aminotransferase family.

Its subcellular location is the mitochondrion. The catalysed reaction is 4-aminobutanoate + pyruvate = succinate semialdehyde + L-alanine. It catalyses the reaction 4-aminobutanoate + glyoxylate = succinate semialdehyde + glycine. Functionally, transaminase that degrades gamma-amino butyric acid (GABA). This is Probable gamma-aminobutyrate transaminase 2, mitochondrial from Oryza sativa subsp. indica (Rice).